The chain runs to 89 residues: Protein S100-A8 (89 aa).

EF-hand domains are found at residues 12–47 (LIDV…KFMK) and 46–81 (MKKK…VGLE). Residues His-17 and His-27 each contribute to the Zn(2+) site. Asp-33 is a Ca(2+) binding site. The residue at position 42 (Cys-42) is an S-nitrosocysteine. Positions 59, 61, 63, and 70 each coordinate Ca(2+). His-83 is a binding site for Zn(2+).

It belongs to the S-100 family. In terms of assembly, homodimer. Preferentially exists as a heterodimer or heterotetramer with S100A9 known as calprotectin (S100A8/A9). S100A8 interacts with AGER, ATP2A2 and with the heterodimeric complex formed by TLR4 and LY96. Calprotectin (S100A8/9) interacts with CEACAM3 and tubulin filaments in a calcium-dependent manner. Heterotetrameric calprotectin (S100A8/A9) interacts with ANXA6 and associates with tubulin filaments in activated monocytes. S100A8 and calprotectin (S100A8/9) interact with NCF2/P67PHOX, RAC1 and RAC2. Calprotectin (S100A8/9) interacts with CYBA and CYBB. Calprotectin (S100A8/9) interacts with NOS2 to form the iNOS-S100A8/A9 transnitrosylase complex. Calprotectin (S100A8/9) interacts with CD69. Found essentially in phagocytic cells.

The protein localises to the secreted. Its subcellular location is the cytoplasm. It is found in the cytoskeleton. It localises to the cell membrane. S100A8 is a calcium- and zinc-binding protein which plays a prominent role in the regulation of inflammatory processes and immune response. It can induce neutrophil chemotaxis and adhesion. Predominantly found as calprotectin (S100A8/A9) which has a wide plethora of intra- and extracellular functions. The intracellular functions include: facilitating leukocyte arachidonic acid trafficking and metabolism, modulation of the tubulin-dependent cytoskeleton during migration of phagocytes and activation of the neutrophilic NADPH-oxidase. Also participates in regulatory T-cell differentiation together with CD69. Activates NADPH-oxidase by facilitating the enzyme complex assembly at the cell membrane, transferring arachidonic acid, an essential cofactor, to the enzyme complex and S100A8 contributes to the enzyme assembly by directly binding to NCF2/P67PHOX. The extracellular functions involve pro-inflammatory, antimicrobial, oxidant-scavenging and apoptosis-inducing activities. Its pro-inflammatory activity includes recruitment of leukocytes, promotion of cytokine and chemokine production, and regulation of leukocyte adhesion and migration. Acts as an alarmin or a danger associated molecular pattern (DAMP) molecule and stimulates innate immune cells via binding to pattern recognition receptors such as Toll-like receptor 4 (TLR4) and receptor for advanced glycation endproducts (AGER). Binding to TLR4 and AGER activates the MAP-kinase and NF-kappa-B signaling pathways resulting in the amplification of the pro-inflammatory cascade. Has antimicrobial activity towards bacteria and fungi and exerts its antimicrobial activity probably via chelation of Zn(2+) which is essential for microbial growth. Can induce cell death via autophagy and apoptosis and this occurs through the cross-talk of mitochondria and lysosomes via reactive oxygen species (ROS) and the process involves BNIP3. Can regulate neutrophil number and apoptosis by an anti-apoptotic effect; regulates cell survival via ITGAM/ITGB and TLR4 and a signaling mechanism involving MEK-ERK. Its role as an oxidant scavenger has a protective role in preventing exaggerated tissue damage by scavenging oxidants. The iNOS-S100A8/A9 transnitrosylase complex is proposed to direct selective inflammatory stimulus-dependent S-nitrosylation of multiple targets such as GAPDH, ANXA5, EZR, MSN and VIM by recognizing a [IL]-x-C-x-x-[DE] motif; S100A8 seems to contribute to S-nitrosylation site selectivity. This is Protein S100-A8 (S100A8) from Bos taurus (Bovine).